The sequence spans 400 residues: Acetate kinase (400 aa).

Asn10 serves as a coordination point for Mg(2+). Lys17 is an ATP binding site. Arg91 serves as a coordination point for substrate. The Proton donor/acceptor role is filled by Asp150. Residues 210 to 214, 285 to 287, and 333 to 337 each bind ATP; these read HLGNG, DCR, and GIGEN. Glu387 provides a ligand contact to Mg(2+).

The protein belongs to the acetokinase family. As to quaternary structure, homodimer. The cofactor is Mg(2+). Mn(2+) serves as cofactor.

It is found in the cytoplasm. It catalyses the reaction acetate + ATP = acetyl phosphate + ADP. Its pathway is metabolic intermediate biosynthesis; acetyl-CoA biosynthesis; acetyl-CoA from acetate: step 1/2. In terms of biological role, catalyzes the formation of acetyl phosphate from acetate and ATP. Can also catalyze the reverse reaction. The chain is Acetate kinase from Pectobacterium atrosepticum (strain SCRI 1043 / ATCC BAA-672) (Erwinia carotovora subsp. atroseptica).